The following is a 753-amino-acid chain: 5-methyltetrahydropteroyltriglutamate--homocysteine methyltransferase (753 aa).

5-methyltetrahydropteroyltri-L-glutamate-binding positions include 17–20 (RELK) and Lys-117. L-homocysteine contacts are provided by residues 431 to 433 (IGS) and Glu-484. L-methionine is bound by residues 431-433 (IGS) and Glu-484. 5-methyltetrahydropteroyltri-L-glutamate contacts are provided by residues 515-516 (RC) and Trp-561. Asp-599 contacts L-homocysteine. Position 599 (Asp-599) interacts with L-methionine. Glu-605 lines the 5-methyltetrahydropteroyltri-L-glutamate pocket. Zn(2+) contacts are provided by His-641, Cys-643, and Glu-665. The active-site Proton donor is the His-694. Cys-726 is a Zn(2+) binding site.

This sequence belongs to the vitamin-B12 independent methionine synthase family. Zn(2+) serves as cofactor.

It catalyses the reaction 5-methyltetrahydropteroyltri-L-glutamate + L-homocysteine = tetrahydropteroyltri-L-glutamate + L-methionine. It functions in the pathway amino-acid biosynthesis; L-methionine biosynthesis via de novo pathway; L-methionine from L-homocysteine (MetE route): step 1/1. In terms of biological role, catalyzes the transfer of a methyl group from 5-methyltetrahydrofolate to homocysteine resulting in methionine formation. This Escherichia coli O139:H28 (strain E24377A / ETEC) protein is 5-methyltetrahydropteroyltriglutamate--homocysteine methyltransferase.